The following is a 376-amino-acid chain: Carboxylic ester hydrolase LipN (376 aa).

Active-site residues include Ser-216, Asp-316, and His-346.

This sequence belongs to the 'GDXG' lipolytic enzyme family.

Its subcellular location is the cytoplasm. The catalysed reaction is a carboxylic ester + H2O = an alcohol + a carboxylate + H(+). It carries out the reaction an acetyl ester + H2O = an aliphatic alcohol + acetate + H(+). The enzyme catalyses a butanoate ester + H2O = an aliphatic alcohol + butanoate + H(+). It catalyses the reaction an octanoate ester + H2O = an aliphatic alcohol + octanoate + H(+). The catalysed reaction is decanoate ester + H2O = decanoate + an aliphatic alcohol + H(+). It carries out the reaction a dodecanoate ester + H2O = an aliphatic alcohol + dodecanoate + H(+). The enzyme catalyses 1,2,3-tributanoylglycerol + H2O = dibutanoylglycerol + butanoate + H(+). It catalyses the reaction 4-acetoxyphenol + H2O = hydroquinone + acetate + H(+). Completely inhibited by tetrahydrolipstatin (THL), RHC-80267 and N-bromosuccinimide. Functionally, non specific carboxylic ester hydrolase. Hydrolyzes various pNP-esters, with a preference for short carbon chain substrates. Can also hydrolyze tributyrin to di- and monobutyrin and 4-hydroxyphenylacetate to hydroquinone. The sequence is that of Carboxylic ester hydrolase LipN from Mycobacterium tuberculosis (strain ATCC 25618 / H37Rv).